Here is a 202-residue protein sequence, read N- to C-terminus: Transmembrane 4 L6 family member 4 (202 aa).

Residues 1 to 9 lie on the Cytoplasmic side of the membrane; the sequence is MCTGGCARC. Residues 10-30 traverse the membrane as a helical segment; it reads LGGTLIPLAFFGFLANILLFF. Topologically, residues 31–45 are extracellular; it reads PGGKVIDDNDHLSQE. Residues 46 to 66 form a helical membrane-spanning segment; the sequence is IWFFGGILGSGVLMIFPALVF. Residues 67-93 lie on the Cytoplasmic side of the membrane; that stretch reads LGLKNNDCCGCCGNEGCGKRFAMFTST. A helical membrane pass occupies residues 94 to 114; sequence IFAVVGFLGAGYSFIISAISI. Residues 115-158 are Extracellular-facing; that stretch reads NKGPKCLMANSTWGYPFHDGDYLNDEALWNKCREPLNVVPWNLT. N-linked (GlcNAc...) asparagine glycans are attached at residues Asn-124 and Asn-156. The chain crosses the membrane as a helical span at residues 159 to 179; that stretch reads LFSILLVVGGIQMVLCAIQVV. Residues 180-202 are Cytoplasmic-facing; sequence NGLLGTLCGDCQCCGCCGGDGPV.

The protein belongs to the L6 tetraspanin family. Post-translationally, N-glycosylated. Glycosylation is required for the growth inhibitory effect. In terms of tissue distribution, jejunum and liver.

Its subcellular location is the membrane. Its function is as follows. Regulates the adhesive and proliferative status of intestinal epithelial cells. Can mediate density-dependent cell proliferation. In Homo sapiens (Human), this protein is Transmembrane 4 L6 family member 4 (TM4SF4).